Consider the following 307-residue polypeptide: Ornithine carbamoyltransferase (307 aa).

Carbamoyl phosphate is bound by residues 50-53 (STRT), Gln-77, Arg-101, and 128-131 (HPCQ). L-ornithine-binding positions include Asn-160, Asp-224, and 228-229 (SM). Carbamoyl phosphate contacts are provided by residues 264-265 (CL) and Arg-292.

Belongs to the aspartate/ornithine carbamoyltransferase superfamily. OTCase family.

It is found in the cytoplasm. The catalysed reaction is carbamoyl phosphate + L-ornithine = L-citrulline + phosphate + H(+). It participates in amino-acid biosynthesis; L-arginine biosynthesis; L-arginine from L-ornithine and carbamoyl phosphate: step 1/3. Its function is as follows. Reversibly catalyzes the transfer of the carbamoyl group from carbamoyl phosphate (CP) to the N(epsilon) atom of ornithine (ORN) to produce L-citrulline. This is Ornithine carbamoyltransferase from Clavibacter michiganensis subsp. michiganensis (strain NCPPB 382).